Here is a 208-residue protein sequence, read N- to C-terminus: Ribosomal RNA small subunit methyltransferase G (208 aa).

S-adenosyl-L-methionine contacts are provided by residues glycine 73, leucine 78, 127 to 128, and arginine 141; that span reads VE.

The protein belongs to the methyltransferase superfamily. RNA methyltransferase RsmG family.

Its subcellular location is the cytoplasm. The enzyme catalyses guanosine(527) in 16S rRNA + S-adenosyl-L-methionine = N(7)-methylguanosine(527) in 16S rRNA + S-adenosyl-L-homocysteine. Its function is as follows. Specifically methylates the N7 position of guanine in position 527 of 16S rRNA. This chain is Ribosomal RNA small subunit methyltransferase G, found in Cereibacter sphaeroides (strain ATCC 17025 / ATH 2.4.3) (Rhodobacter sphaeroides).